A 381-amino-acid chain; its full sequence is GDP-mannose transporter (381 aa).

The Cytoplasmic portion of the chain corresponds to 1-44 (MAEGKKTDDYTIQMDSIDQGNKSFEAPPPPQPRSPPSGSLSNNP). The segment at 19–41 (QGNKSFEAPPPPQPRSPPSGSLS) is disordered. Positions 26 to 35 (APPPPQPRSP) are enriched in pro residues. A helical membrane pass occupies residues 45–65 (ILPVLAYCGSSILMTVMNKYV). Over 66–70 (LSGTD) the chain is Lumenal. Residues 71–91 (FNLNFFLLCIQSLVCIIAIQT) form a helical membrane-spanning segment. Over 92–109 (CKSCGLITYRDFSADEAR) the chain is Cytoplasmic. A helical membrane pass occupies residues 110–126 (KWFPITLLLIGMIYTGS). Over 127 to 133 (KALQFLS) the chain is Lumenal. The helical transmembrane segment at 134–150 (IPVYTIFKNLTIILIAY) threads the bilayer. Topologically, residues 151-159 (GEVLWFGGS) are cytoplasmic. A helical transmembrane segment spans residues 160-181 (VTGLTLFSFGLMVLSSIIAAWA). Residues 182–199 (DIKHAVESNGDATAKVST) are Lumenal-facing. The chain crosses the membrane as a helical span at residues 200 to 220 (LNAGYIWMLVNCLCTSSYVLG). At 221 to 234 (MRKRIKLTNFKDFD) the chain is on the cytoplasmic side. The helical transmembrane segment at 235–255 (TMFYNNLLSIPVLIVLSAFLE) threads the bilayer. Residues 256–273 (DWSSTNVNRNFPPMDRNS) lie on the Lumenal side of the membrane. Residues 274–294 (IVFAMILSGLSSVFISYTSAW) form a helical membrane-spanning segment. Over 295–302 (CVRVTSST) the chain is Cytoplasmic. The helical transmembrane segment at 303 to 323 (TYSMVGALNKLPIAISGLIFF) threads the bilayer. The Lumenal portion of the chain corresponds to 324–326 (DAP). The helical transmembrane segment at 327 to 347 (VTFPSVSAIVVGFVSGIVYAV) threads the bilayer. Residues 348-381 (AKIKQNAKPRTGVLPTANPPVSASSQSMRDSLRS) lie on the Cytoplasmic side of the membrane. The interval 358-381 (TGVLPTANPPVSASSQSMRDSLRS) is disordered. Over residues 366 to 381 (PPVSASSQSMRDSLRS) the composition is skewed to polar residues.

Belongs to the TPT transporter family. SLC35D subfamily. In terms of assembly, homooligomer.

The protein resides in the golgi apparatus membrane. It localises to the cytoplasmic vesicle membrane. It is found in the endoplasmic reticulum membrane. In terms of biological role, involved in the import of GDP-mannose from the cytoplasm into the Golgi lumen. The polypeptide is GDP-mannose transporter (gmt1) (Aspergillus niger (strain ATCC MYA-4892 / CBS 513.88 / FGSC A1513)).